Here is an 88-residue protein sequence, read N- to C-terminus: Probable oxaloacetate decarboxylase gamma chain (88 aa).

Residues 13–35 (LMFSGMGFVIIFLLILIWAIGIV) form a helical membrane-spanning segment.

It belongs to the OadG family. As to quaternary structure, heterotrimer of an alpha, a beta and a gamma subunit. The cofactor is Na(+).

The protein localises to the cell membrane. It carries out the reaction oxaloacetate + 2 Na(+)(in) + H(+) = pyruvate + 2 Na(+)(out) + CO2. Its function is as follows. Catalyzes the decarboxylation of oxaloacetate coupled to Na(+) translocation. The polypeptide is Probable oxaloacetate decarboxylase gamma chain (Mannheimia succiniciproducens (strain KCTC 0769BP / MBEL55E)).